The chain runs to 413 residues: DnaJ protein homolog (413 aa).

Residues 10 to 75 enclose the J domain; sequence NTKYYEILGV…REIYDQYGED (66 aa). A CR-type zinc finger spans residues 133–217; sequence GTSKKLSLSR…CKGEKVVQEK (85 aa). CXXCXGXG motif repeat units follow at residues 146–153, 162–169, 189–196, and 205–212; these read CSKCKGKG, CPGCQGSG, CNECKGTG, and CSQCKGEK. The tract at residues 387–413 is disordered; sequence RRKQAQEAYDEDEDMHGGAQRVQCAQQ. Residue cysteine 410 is modified to Cysteine methyl ester. Cysteine 410 carries S-farnesyl cysteine lipidation. The propeptide at 411–413 is removed in mature form; sequence AQQ.

As to expression, expressed in seedlings in all tissues, but exceedingly high levels in hypocotyledons and roots.

It is found in the cell membrane. Plays a continuous role in plant development probably in the structural organization of compartments. This is DnaJ protein homolog (DNAJ1) from Cucumis sativus (Cucumber).